Reading from the N-terminus, the 311-residue chain is Malate dehydrogenase (311 aa).

NAD(+)-binding positions include 7 to 13 (GAAGGIG) and D34. Substrate contacts are provided by R81 and R87. NAD(+) contacts are provided by residues N94 and 117–119 (ITN). The substrate site is built by N119 and R153. H177 functions as the Proton acceptor in the catalytic mechanism. An NAD(+)-binding site is contributed by M227.

Belongs to the LDH/MDH superfamily. MDH type 1 family. As to quaternary structure, homodimer.

It carries out the reaction (S)-malate + NAD(+) = oxaloacetate + NADH + H(+). Its function is as follows. Catalyzes the reversible oxidation of malate to oxaloacetate. This Aliivibrio salmonicida (strain LFI1238) (Vibrio salmonicida (strain LFI1238)) protein is Malate dehydrogenase.